Here is a 553-residue protein sequence, read N- to C-terminus: Urocanate hydratase (553 aa).

Residues 51–52 (GG), Q129, 175–177 (GMG), E195, R200, 241–242 (NA), 262–266 (QTSAH), 272–273 (YL), and Y321 each bind NAD(+). Residue C409 is part of the active site. NAD(+) is bound at residue G491.

Belongs to the urocanase family. NAD(+) is required as a cofactor.

The protein resides in the cytoplasm. The catalysed reaction is 4-imidazolone-5-propanoate = trans-urocanate + H2O. It functions in the pathway amino-acid degradation; L-histidine degradation into L-glutamate; N-formimidoyl-L-glutamate from L-histidine: step 2/3. Its function is as follows. Catalyzes the conversion of urocanate to 4-imidazolone-5-propionate. In Sphingopyxis alaskensis (strain DSM 13593 / LMG 18877 / RB2256) (Sphingomonas alaskensis), this protein is Urocanate hydratase.